The primary structure comprises 531 residues: NADH-quinone oxidoreductase subunit N (531 aa).

13 helical membrane passes run 13–33 (LAPI…EAFA), 45–65 (LALL…AEVI), 85–105 (PALA…LVIA), 150–170 (LFSV…TLFI), 200–220 (YFLL…LLYG), 242–262 (GLLV…VGAV), 289–309 (VAAF…MTWD), 310–330 (IQPF…VLAI), 339–359 (LAYS…AMSP), 365–385 (VFFY…LVAL), 415–435 (VATV…TSGF), 460–480 (ASAA…FTSP), and 496–516 (GFTA…GVWP).

The protein belongs to the complex I subunit 2 family. NDH-1 is composed of 14 different subunits. Subunits NuoA, H, J, K, L, M, N constitute the membrane sector of the complex.

The protein localises to the cell membrane. The catalysed reaction is a quinone + NADH + 5 H(+)(in) = a quinol + NAD(+) + 4 H(+)(out). Its function is as follows. NDH-1 shuttles electrons from NADH, via FMN and iron-sulfur (Fe-S) centers, to quinones in the respiratory chain. The immediate electron acceptor for the enzyme in this species is believed to be a menaquinone. Couples the redox reaction to proton translocation (for every two electrons transferred, four hydrogen ions are translocated across the cytoplasmic membrane), and thus conserves the redox energy in a proton gradient. This chain is NADH-quinone oxidoreductase subunit N, found in Beutenbergia cavernae (strain ATCC BAA-8 / DSM 12333 / CCUG 43141 / JCM 11478 / NBRC 16432 / NCIMB 13614 / HKI 0122).